Reading from the N-terminus, the 225-residue chain is Uracil-DNA glycosylase (225 aa).

Asp61 functions as the Proton acceptor in the catalytic mechanism.

Belongs to the uracil-DNA glycosylase (UDG) superfamily. UNG family.

The protein localises to the cytoplasm. The enzyme catalyses Hydrolyzes single-stranded DNA or mismatched double-stranded DNA and polynucleotides, releasing free uracil.. Its function is as follows. Excises uracil residues from the DNA which can arise as a result of misincorporation of dUMP residues by DNA polymerase or due to deamination of cytosine. In Actinobacillus pleuropneumoniae serotype 5b (strain L20), this protein is Uracil-DNA glycosylase.